A 162-amino-acid polypeptide reads, in one-letter code: Shikimate kinase (162 aa).

10 to 15 (GAGKST) provides a ligand contact to ATP. Ser14 lines the Mg(2+) pocket. The substrate site is built by Asp28, Arg52, and Gly73. Arg113 is an ATP binding site. Arg129 is a binding site for substrate.

The protein belongs to the shikimate kinase family. As to quaternary structure, monomer. Requires Mg(2+) as cofactor.

The protein resides in the cytoplasm. The catalysed reaction is shikimate + ATP = 3-phosphoshikimate + ADP + H(+). It functions in the pathway metabolic intermediate biosynthesis; chorismate biosynthesis; chorismate from D-erythrose 4-phosphate and phosphoenolpyruvate: step 5/7. Functionally, catalyzes the specific phosphorylation of the 3-hydroxyl group of shikimic acid using ATP as a cosubstrate. This is Shikimate kinase from Lactococcus lactis subsp. cremoris (strain SK11).